A 358-amino-acid chain; its full sequence is MVEITEVIEPEWQTRNDIQNLVNQKTLQWVFVGGKGGVGKTTISSSIATALAETRESVLLLSTDPAHSLSDAFGQKFTHEPRLVNGFTNLYAMELNTSQIIDGLDGLRETHSFLKNVPDILMMLPGIDEALSFVELMQSVQSRRFSVTIFDTAPTGHTLKFLKLPDVLEKILDSLLKLENTMGGLLQLFSSMTKAQMSQNELFDKIKLLGDMINTTHEQMKNPDLTTFICVCIPEFLSVYETERLIQDLAKSEIDCSYIIVNQVLKHIQLGGLIEDAWDGLTEEQQRIMTPFFEKVREHHSTHNSRVDVQRKYLSDIKDLYQEDFNIVAVHQNKQEVRGKDALVAFAKKLMQHSPLPI.

35 to 42 (KGGVGKTT) serves as a coordination point for ATP. Residue Asp64 is part of the active site. Positions 235 and 262 each coordinate ATP.

This sequence belongs to the arsA ATPase family. As to quaternary structure, homodimer.

Its subcellular location is the cytoplasm. It is found in the endoplasmic reticulum. In terms of biological role, ATPase required for the post-translational delivery of tail-anchored (TA) proteins to the endoplasmic reticulum. Recognizes and selectively binds the transmembrane domain of TA proteins in the cytosol. This complex then targets to the endoplasmic reticulum by membrane-bound receptors, where the tail-anchored protein is released for insertion. This process is regulated by ATP binding and hydrolysis. ATP binding drives the homodimer towards the closed dimer state, facilitating recognition of newly synthesized TA membrane proteins. ATP hydrolysis is required for insertion. Subsequently, the homodimer reverts towards the open dimer state, lowering its affinity for the membrane-bound receptor, and returning it to the cytosol to initiate a new round of targeting. This is ATPase ASNA1 homolog from Babesia bovis.